An 83-amino-acid polypeptide reads, in one-letter code: U25-theraphotoxin-Cg1a (83 aa).

An N-terminal signal peptide occupies residues 1-23; it reads MRFHTLLFLSFLLLVSCALICTA. Residues 24–48 constitute a propeptide that is removed on maturation; it reads QHPGLKKSGMFHENVGKGQHIEKKR. Disulfide bonds link C50/C66, C57/C71, and C65/C81.

It belongs to the neurotoxin 07 (Beta/delta-agtx) family. 03 (aga-4) subfamily. JZTX sub-subfamily. As to expression, expressed by the venom gland.

It localises to the secreted. Functionally, inhibits TTX-sensitive sodium currents in rat dorsal root ganglion (DRG) neurons. This is U25-theraphotoxin-Cg1a from Chilobrachys guangxiensis (Chinese earth tiger tarantula).